A 103-amino-acid chain; its full sequence is MVKQVSDSSEFKSIVCQDKLVVVDFFATWCGPCKAIAPKFEQFSNTYSDATFIKVDVDQLSEIAAEAGVHAMPSFFLYKNGEKIEEIVGANPAKLEASIKANL.

Positions 2-103 (VKQVSDSSEF…KLEASIKANL (102 aa)) constitute a Thioredoxin domain. Residues cysteine 30 and cysteine 33 each act as nucleophile in the active site. Residues cysteine 30 and cysteine 33 are joined by a disulfide bond.

The protein belongs to the thioredoxin family.

Participates in various redox reactions through the reversible oxidation of its active center dithiol to a disulfide and catalyzes dithiol-disulfide exchange reactions. The protein is Thioredoxin-1 (trx1) of Schizosaccharomyces pombe (strain 972 / ATCC 24843) (Fission yeast).